Here is a 265-residue protein sequence, read N- to C-terminus: Imidazole glycerol phosphate synthase subunit HisF (265 aa).

Catalysis depends on residues D17 and D136.

Belongs to the HisA/HisF family. As to quaternary structure, heterodimer of HisH and HisF.

The protein resides in the cytoplasm. The catalysed reaction is 5-[(5-phospho-1-deoxy-D-ribulos-1-ylimino)methylamino]-1-(5-phospho-beta-D-ribosyl)imidazole-4-carboxamide + L-glutamine = D-erythro-1-(imidazol-4-yl)glycerol 3-phosphate + 5-amino-1-(5-phospho-beta-D-ribosyl)imidazole-4-carboxamide + L-glutamate + H(+). The protein operates within amino-acid biosynthesis; L-histidine biosynthesis; L-histidine from 5-phospho-alpha-D-ribose 1-diphosphate: step 5/9. In terms of biological role, IGPS catalyzes the conversion of PRFAR and glutamine to IGP, AICAR and glutamate. The HisF subunit catalyzes the cyclization activity that produces IGP and AICAR from PRFAR using the ammonia provided by the HisH subunit. The protein is Imidazole glycerol phosphate synthase subunit HisF of Mycobacterium avium (strain 104).